The primary structure comprises 364 residues: MNDEINEPPPNICEQCLGDEANIRMTKIPQGSECKICTLPFTLYHFKTSKRSNNIIKTLICVRCATQRNICQCCMLDSRWHIPIQLRDHLISLVNEENVMTEEAKNDMMKRFLSLKNVKLGGAQITSDPSEADNIVDKLKNILLRATSDGPSTPLIKNTTALYKNEKGANEVKNLEKYASVDISHILKKLPLNESFLKNPSTKSFFLYNIDASIPEWKITDTVSQLLGIKKWKDGNSLSLIVNHKAKCGGLRFQSSELGERFVSKISETLVTPKGLKRGVLLIDRFRIFIIPWSSGFSAASFGTNTAENIKLSLSLNKLIQLELGLSFPTKSTDNAKNDKKKTSKKVHKDRSKKSKPRANKLTI.

The segment at 331–364 is disordered; sequence KSTDNAKNDKKKTSKKVHKDRSKKSKPRANKLTI. The span at 339-364 shows a compositional bias: basic residues; that stretch reads DKKKTSKKVHKDRSKKSKPRANKLTI.

The protein belongs to the SLT11 family. In terms of assembly, belongs to the CWC complex (or CEF1-associated complex), a spliceosome subcomplex composed of the U2, U5 and U6 snRNAs and at least BUD13, BUD31, BRR2, CDC40, CEF1, CLF1, CUS1, CWC2, CWC15, CWC21, CWC22, CWC23, CWC24, CWC25, CWC27, ECM2, HSH155, IST3, ISY1, LEA1, MSL1, NTC20, PRP8, PRP9, PRP11, PRP19, PRP21, PRP22, PRP45, PRP46, SLU7, SMB1, SMD1, SMD2, SMD3, SMX2, SMX3, SNT309, SNU114, SPP2, SYF1, SYF2, RSE1 and YJU2. Interacts with SLU7.

Its subcellular location is the nucleus. Involved in pre-mRNA splicing. Facilitates the cooperative formation of U2/U6 helix II in association with stem II in the spliceosome. Binds to RNA. This Saccharomyces cerevisiae (strain ATCC 204508 / S288c) (Baker's yeast) protein is Pre-mRNA-splicing factor SLT11 (ECM2).